The chain runs to 284 residues: 2-dehydro-3-deoxyphosphooctonate aldolase (284 aa).

This sequence belongs to the KdsA family.

It localises to the cytoplasm. The enzyme catalyses D-arabinose 5-phosphate + phosphoenolpyruvate + H2O = 3-deoxy-alpha-D-manno-2-octulosonate-8-phosphate + phosphate. It functions in the pathway carbohydrate biosynthesis; 3-deoxy-D-manno-octulosonate biosynthesis; 3-deoxy-D-manno-octulosonate from D-ribulose 5-phosphate: step 2/3. The protein operates within bacterial outer membrane biogenesis; lipopolysaccharide biosynthesis. The polypeptide is 2-dehydro-3-deoxyphosphooctonate aldolase (Klebsiella pneumoniae subsp. pneumoniae (strain ATCC 700721 / MGH 78578)).